Reading from the N-terminus, the 279-residue chain is Lipid phosphate phosphatase epsilon 1, chloroplastic (279 aa).

A chloroplast-targeting transit peptide spans 1-88; sequence MAASSSLLLL…SFINNSSEIR (88 aa). A run of 5 helical transmembrane segments spans residues 126–142, 164–184, 185–205, 219–239, and 255–275; these read LWAV…SVVL, SHAQ…MEWL, GTNG…SYFI, VVVG…MWNS, and VFLF…LNWF.

The protein belongs to the PA-phosphatase related phosphoesterase family. Expressed in root tips, root branch points, cotyledons and leaves.

It localises to the plastid. The protein localises to the chloroplast inner membrane. Its activity is regulated as follows. Inhibited by Mg(2+). Its function is as follows. Exhibits phosphatidate phosphatase (PAP) activity in vitro. May play a secondary role as PAP in plastids. The protein is Lipid phosphate phosphatase epsilon 1, chloroplastic (LPPE1) of Arabidopsis thaliana (Mouse-ear cress).